Consider the following 317-residue polypeptide: 4-hydroxy-3-methylbut-2-enyl diphosphate reductase (317 aa).

Cysteine 12 contributes to the [4Fe-4S] cluster binding site. (2E)-4-hydroxy-3-methylbut-2-enyl diphosphate-binding residues include histidine 41 and histidine 74. Dimethylallyl diphosphate-binding residues include histidine 41 and histidine 74. Isopentenyl diphosphate-binding residues include histidine 41 and histidine 74. Cysteine 97 contributes to the [4Fe-4S] cluster binding site. Histidine 125 is a binding site for (2E)-4-hydroxy-3-methylbut-2-enyl diphosphate. Residue histidine 125 coordinates dimethylallyl diphosphate. Histidine 125 contributes to the isopentenyl diphosphate binding site. Catalysis depends on glutamate 127, which acts as the Proton donor. Residue threonine 168 participates in (2E)-4-hydroxy-3-methylbut-2-enyl diphosphate binding. Cysteine 198 provides a ligand contact to [4Fe-4S] cluster. Serine 226, serine 227, asparagine 228, and serine 270 together coordinate (2E)-4-hydroxy-3-methylbut-2-enyl diphosphate. Dimethylallyl diphosphate-binding residues include serine 226, serine 227, asparagine 228, and serine 270. Isopentenyl diphosphate is bound by residues serine 226, serine 227, asparagine 228, and serine 270.

It belongs to the IspH family. As to quaternary structure, homodimer. Requires [4Fe-4S] cluster as cofactor.

It carries out the reaction isopentenyl diphosphate + 2 oxidized [2Fe-2S]-[ferredoxin] + H2O = (2E)-4-hydroxy-3-methylbut-2-enyl diphosphate + 2 reduced [2Fe-2S]-[ferredoxin] + 2 H(+). The enzyme catalyses dimethylallyl diphosphate + 2 oxidized [2Fe-2S]-[ferredoxin] + H2O = (2E)-4-hydroxy-3-methylbut-2-enyl diphosphate + 2 reduced [2Fe-2S]-[ferredoxin] + 2 H(+). It participates in isoprenoid biosynthesis; dimethylallyl diphosphate biosynthesis; dimethylallyl diphosphate from (2E)-4-hydroxy-3-methylbutenyl diphosphate: step 1/1. It functions in the pathway isoprenoid biosynthesis; isopentenyl diphosphate biosynthesis via DXP pathway; isopentenyl diphosphate from 1-deoxy-D-xylulose 5-phosphate: step 6/6. Its function is as follows. Catalyzes the conversion of 1-hydroxy-2-methyl-2-(E)-butenyl 4-diphosphate (HMBPP) into a mixture of isopentenyl diphosphate (IPP) and dimethylallyl diphosphate (DMAPP). Acts in the terminal step of the DOXP/MEP pathway for isoprenoid precursor biosynthesis. In Yersinia pestis bv. Antiqua (strain Antiqua), this protein is 4-hydroxy-3-methylbut-2-enyl diphosphate reductase.